The primary structure comprises 87 residues: Small ribosomal subunit protein bS20 (87 aa).

The span at 1 to 11 shows a compositional bias: basic residues; the sequence is MANIKSAKKRA. A disordered region spans residues 1–26; it reads MANIKSAKKRAVQSEKRRQHNASQRS.

It belongs to the bacterial ribosomal protein bS20 family.

In terms of biological role, binds directly to 16S ribosomal RNA. In Actinobacillus pleuropneumoniae serotype 5b (strain L20), this protein is Small ribosomal subunit protein bS20.